The sequence spans 178 residues: uncharacterized protein (178 aa).

The protein belongs to the tail fiber family.

This is an uncharacterized protein from Escherichia coli (strain K12).